Reading from the N-terminus, the 248-residue chain is Granzyme-like protein 1 (248 aa).

The N-terminal stretch at 1–18 is a signal peptide; it reads MNLLLLLLTVSLAPTTEA. Positions 19–20 are cleaved as a propeptide — activation peptide; sequence AE. Positions 21-246 constitute a Peptidase S1 domain; it reads IIGGHEADPH…FLSWIEETMK (226 aa). Residues Cys50 and Cys66 are joined by a disulfide bond. His65 serves as the catalytic Charge relay system. N-linked (GlcNAc...) asparagine glycosylation is present at Asn72. Asp109 (charge relay system) is an active-site residue. 2 cysteine pairs are disulfide-bonded: Cys143/Cys210 and Cys174/Cys189. Ser204 (charge relay system) is an active-site residue.

This sequence belongs to the peptidase S1 family. Granzyme subfamily. In terms of tissue distribution, duodenum.

Functionally, this enzyme is necessary for target cell lysis in cell-mediated immune responses. The protein is Granzyme-like protein 1 of Rattus norvegicus (Rat).